Here is a 340-residue protein sequence, read N- to C-terminus: Protein RecA (340 aa).

65–72 (GPESGGKT) contributes to the ATP binding site.

This sequence belongs to the RecA family.

It localises to the cytoplasm. Functionally, can catalyze the hydrolysis of ATP in the presence of single-stranded DNA, the ATP-dependent uptake of single-stranded DNA by duplex DNA, and the ATP-dependent hybridization of homologous single-stranded DNAs. It interacts with LexA causing its activation and leading to its autocatalytic cleavage. The sequence is that of Protein RecA from Thermus thermophilus (strain ATCC 27634 / DSM 579 / HB8).